The chain runs to 183 residues: Oleosin-B2 (183 aa).

The tract at residues 1–23 (QASIFSRFFRMFSFIFPFVNVIK) is polar. A run of 3 helical transmembrane segments spans residues 24–44 (LIIASVTSLVCLAFSCVALGG), 46–66 (AVALIVSTPLFIMFSPILVPA), and 72–92 (LLASGLMAGTTLGLTGIGLIM). A hydrophobic region spans residues 24-95 (LIIASVTSLV…TGIGLIMGLV (72 aa)).

This sequence belongs to the oleosin family. As to expression, the full-length protein is found in the tapetal lipid bodies of immature anthers, the proteolytically cleaved C-terminal product is found on the coats of pollen grains. Not present in seeds.

The protein resides in the lipid droplet. The protein localises to the membrane. Its function is as follows. Many of the major pollen coat proteins are derived from endoproteolytic cleavage of oleosin-like proteins. This chain is Oleosin-B2 (OlnB2), found in Brassica napus (Rape).